Here is a 545-residue protein sequence, read N- to C-terminus: ATP synthase subunit alpha (545 aa).

Residue 173–180 coordinates ATP; the sequence is GDRKTGKT.

The protein belongs to the ATPase alpha/beta chains family. In terms of assembly, F-type ATPases have 2 components, CF(1) - the catalytic core - and CF(0) - the membrane proton channel. CF(1) has five subunits: alpha(3), beta(3), gamma(1), delta(1), epsilon(1). CF(0) has three main subunits: a(1), b(2) and c(9-12). The alpha and beta chains form an alternating ring which encloses part of the gamma chain. CF(1) is attached to CF(0) by a central stalk formed by the gamma and epsilon chains, while a peripheral stalk is formed by the delta and b chains.

The protein resides in the cell membrane. The enzyme catalyses ATP + H2O + 4 H(+)(in) = ADP + phosphate + 5 H(+)(out). Its function is as follows. Produces ATP from ADP in the presence of a proton gradient across the membrane. The alpha chain is a regulatory subunit. This chain is ATP synthase subunit alpha, found in Renibacterium salmoninarum (strain ATCC 33209 / DSM 20767 / JCM 11484 / NBRC 15589 / NCIMB 2235).